A 670-amino-acid chain; its full sequence is Alpha-1,4-glucan:maltose-1-phosphate maltosyltransferase (670 aa).

Alpha-maltose 1-phosphate contacts are provided by lysine 262, glutamine 322, and aspartate 357. Aspartate 393 serves as the catalytic Nucleophile. An alpha-maltose 1-phosphate-binding site is contributed by asparagine 394. The Proton donor role is filled by glutamate 422. 534 to 535 lines the alpha-maltose 1-phosphate pocket; it reads KY.

It belongs to the glycosyl hydrolase 13 family. GlgE subfamily. As to quaternary structure, homodimer.

The enzyme catalyses alpha-maltose 1-phosphate + [(1-&gt;4)-alpha-D-glucosyl](n) = [(1-&gt;4)-alpha-D-glucosyl](n+2) + phosphate. Its function is as follows. Maltosyltransferase that uses maltose 1-phosphate (M1P) as the sugar donor to elongate linear or branched alpha-(1-&gt;4)-glucans. Is involved in a branched alpha-glucan biosynthetic pathway from trehalose, together with TreS, Mak and GlgB. In Chlorobaculum tepidum (strain ATCC 49652 / DSM 12025 / NBRC 103806 / TLS) (Chlorobium tepidum), this protein is Alpha-1,4-glucan:maltose-1-phosphate maltosyltransferase.